The following is a 145-amino-acid chain: MIALIQRVSDARVTVAGENIGQIGPGLLVLLGVEKEDDEAKCKRLAQRVLAYRIFADGDDKMNLNVQQAGGKILVISQFTLAAQTNKGNRPGFSKGAEPIEAKRLYKLFNKNCSEMGIKVETGEFAADMQVSSTNDGPVTFWLQI.

The Gly-cisPro motif, important for rejection of L-amino acids signature appears at 137-138 (GP).

This sequence belongs to the DTD family. In terms of assembly, homodimer.

The protein localises to the cytoplasm. The enzyme catalyses glycyl-tRNA(Ala) + H2O = tRNA(Ala) + glycine + H(+). It catalyses the reaction a D-aminoacyl-tRNA + H2O = a tRNA + a D-alpha-amino acid + H(+). Its function is as follows. An aminoacyl-tRNA editing enzyme that deacylates mischarged D-aminoacyl-tRNAs. Also deacylates mischarged glycyl-tRNA(Ala), protecting cells against glycine mischarging by AlaRS. Acts via tRNA-based rather than protein-based catalysis; rejects L-amino acids rather than detecting D-amino acids in the active site. By recycling D-aminoacyl-tRNA to D-amino acids and free tRNA molecules, this enzyme counteracts the toxicity associated with the formation of D-aminoacyl-tRNA entities in vivo and helps enforce protein L-homochirality. In Psychromonas ingrahamii (strain DSM 17664 / CCUG 51855 / 37), this protein is D-aminoacyl-tRNA deacylase.